Reading from the N-terminus, the 164-residue chain is Thiol peroxidase (164 aa).

A Thioredoxin domain is found at 18–163; the sequence is VSEGQHAPDF…FDAALEAYRN (146 aa). The Cysteine sulfenic acid (-SOH) intermediate role is filled by cysteine 60. Residues cysteine 60 and cysteine 93 are joined by a disulfide bond.

It belongs to the peroxiredoxin family. Tpx subfamily. Homodimer.

The enzyme catalyses a hydroperoxide + [thioredoxin]-dithiol = an alcohol + [thioredoxin]-disulfide + H2O. In terms of biological role, thiol-specific peroxidase that catalyzes the reduction of hydrogen peroxide and organic hydroperoxides to water and alcohols, respectively. Plays a role in cell protection against oxidative stress by detoxifying peroxides. This is Thiol peroxidase from Staphylococcus haemolyticus (strain JCSC1435).